Here is a 253-residue protein sequence, read N- to C-terminus: Bridging integrator 3 (253 aa).

Positions 9–232 (GQPKKQIVSK…LDQPGHSDEQ (224 aa)) constitute a BAR domain. Coiled coils occupy residues 16–57 (VSKT…AMSK) and 120–151 (SLNM…KEKT). Positions 222 to 241 (QLDQPGHSDEQRERENETKL) are disordered. Over residues 227–241 (GHSDEQRERENETKL) the composition is skewed to basic and acidic residues.

It is found in the cytoplasm. It localises to the cytoskeleton. Functionally, involved in cytokinesis and septation where it has a role in the localization of F-actin. The sequence is that of Bridging integrator 3 (Bin3) from Mus musculus (Mouse).